The following is a 506-amino-acid chain: MSQSRARKVLIVGAGPVGALTALSLHRRGWEVEVWETRDDPRGQDAAPSNLRSINLAISSRGLEALRSVDPSIAENFLEEAIPMKGRMIHHTDGKQESQLYDPIGGQSINSISRPILNQRLVQSLPEAVKLRFNTKLKHIDFKNRVAYASHKQETSLLPGEESEKDKKQNTEDEDGTAFDLVIGCDGSWSKVRTAMMRAERIDFSQSFIPHAYIELHMPSDPASPGGYAMDKNHLHIWPRHAFMLIGLPNKDGSFTLTLFIPFSSLELLDTRESAAAFFREHFPSAVDIVGEKVLLDDFEKNPRGNLVTINCTPSAWSSHAILLGDASHSMVPFYGQGLNCGLEDVRVLSSILERHHISPTTTLALGETDPELELALKAYSDERQGDLKAICELALQNYTEMRSHVLSPLHHLRRQVDKVFTTLFRSAPQATLSLMEPFPTKKVRGWTSLYEMVTFRPDVGYSEALRKERWQKDVVGYAGWIGGVVGVGAAGVFAATMAKKWLERR.

The interval 153 to 175 is disordered; sequence QETSLLPGEESEKDKKQNTEDED. Positions 162-171 are enriched in basic and acidic residues; sequence ESEKDKKQNT.

The protein belongs to the aromatic-ring hydroxylase family. KMO subfamily. FAD is required as a cofactor.

The protein resides in the mitochondrion outer membrane. It catalyses the reaction L-kynurenine + NADPH + O2 + H(+) = 3-hydroxy-L-kynurenine + NADP(+) + H2O. The protein operates within cofactor biosynthesis; NAD(+) biosynthesis; quinolinate from L-kynurenine: step 1/3. In terms of biological role, catalyzes the hydroxylation of L-kynurenine (L-Kyn) to form 3-hydroxy-L-kynurenine (L-3OHKyn). Required for synthesis of quinolinic acid. The polypeptide is Kynurenine 3-monooxygenase (Cryptococcus neoformans var. neoformans serotype D (strain B-3501A) (Filobasidiella neoformans)).